The sequence spans 123 residues: Basic phospholipase A2 Ph-TX1 (123 aa).

Positions 27, 29, and 31 each coordinate Ca(2+). 6 disulfides stabilise this stretch: Cys28/Cys45, Cys44/Cys96, Cys50/Cys123, Cys51/Cys89, Cys59/Cys83, and Cys77/Cys87. His48 is an active-site residue. Asp49 contributes to the Ca(2+) binding site. Asp90 is an active-site residue.

This sequence belongs to the phospholipase A2 family. Group II subfamily. D49 sub-subfamily. In terms of assembly, monomer. The cofactor is Ca(2+). Expressed by the venom gland.

Its subcellular location is the secreted. The catalysed reaction is a 1,2-diacyl-sn-glycero-3-phosphocholine + H2O = a 1-acyl-sn-glycero-3-phosphocholine + a fatty acid + H(+). Inhibited by divalent cations different from calcium ions (cadmium, magnesium, manganese, zinc), since they act as competitive antagonists of this cofactor. Its function is as follows. Snake venom phospholipase A2 (PLA2) that induces in vivo myotoxicity, moderates footpad edema, and causes in vitro neuromuscular blockade. PLA2 catalyzes the calcium-dependent hydrolysis of the 2-acyl groups in 3-sn-phosphoglycerides. The sequence is that of Basic phospholipase A2 Ph-TX1 from Bothrocophias hyoprora (Amazonian hognose viper).